The sequence spans 189 residues: Xanthine phosphoribosyltransferase (189 aa).

Xanthine-binding residues include Leu20 and Asn27. 128-132 (ANGQA) provides a ligand contact to 5-phospho-alpha-D-ribose 1-diphosphate. Lys156 is a xanthine binding site.

It belongs to the purine/pyrimidine phosphoribosyltransferase family. Xpt subfamily. In terms of assembly, homodimer.

The protein resides in the cytoplasm. It carries out the reaction XMP + diphosphate = xanthine + 5-phospho-alpha-D-ribose 1-diphosphate. It functions in the pathway purine metabolism; XMP biosynthesis via salvage pathway; XMP from xanthine: step 1/1. Functionally, converts the preformed base xanthine, a product of nucleic acid breakdown, to xanthosine 5'-monophosphate (XMP), so it can be reused for RNA or DNA synthesis. This Leuconostoc mesenteroides subsp. mesenteroides (strain ATCC 8293 / DSM 20343 / BCRC 11652 / CCM 1803 / JCM 6124 / NCDO 523 / NBRC 100496 / NCIMB 8023 / NCTC 12954 / NRRL B-1118 / 37Y) protein is Xanthine phosphoribosyltransferase.